The primary structure comprises 558 residues: uncharacterized protein (558 aa).

Helical transmembrane passes span 15 to 32, 39 to 61, 76 to 95, 104 to 126, and 166 to 188; these read PSVTQTIIILSLVCALGL, IGTISLGITFVFFVGILASHFGV, LVIFVYALGLQVGPSFFPSL, LISLGLVLLTFLLCILLYYILGI, and MALACAVTYPLGVVGVIIALALL. RCK C-terminal domains lie at 196 to 278 and 286 to 370; these read EERD…LFGK and RPDI…ILGD. 5 consecutive transmembrane segments (helical) span residues 383–405, 409–426, 446–468, 473–495, and 533–555; these read LFGGLVLGCVFGMIPFYLPGVSM, LGLAGGPIIIGILMGAFG, FGIILYLGGLGLASGANFFDTII, LLWVGAGFLITMLPTLLVGWASI, and VVYATVYPLSMFVRIIFAQIMIL.

Belongs to the AAE transporter (TC 2.A.81) family.

The protein resides in the cell membrane. This is an uncharacterized protein from Porphyromonas gingivalis (strain ATCC BAA-308 / W83).